The chain runs to 65 residues: Large ribosomal subunit protein uL29 (65 aa).

Belongs to the universal ribosomal protein uL29 family.

This chain is Large ribosomal subunit protein uL29 (rpmC), found in Borreliella burgdorferi (strain ATCC 35210 / DSM 4680 / CIP 102532 / B31) (Borrelia burgdorferi).